The chain runs to 224 residues: Putative cytochrome c-type biogenesis protein DbsD-like (224 aa).

5 helical membrane-spanning segments follow: residues 32–52 (FIFLSGLFTSLSPCIISILPV), 74–94 (FLFCLGTISSFITLGILATLI), 104–124 (GIPTISAVVIIYMGLNLLNIV), 150–170 (GIGIAISSCSTPIFVTLLVWI), and 176–196 (IFTGLIFILIYSIGYIFPIII).

Belongs to the DsbD family.

It is found in the plastid. It localises to the chloroplast membrane. In terms of biological role, could be involved in cytochrome c synthesis. The polypeptide is Putative cytochrome c-type biogenesis protein DbsD-like (Pyropia yezoensis (Susabi-nori)).